The primary structure comprises 88 residues: Large ribosomal subunit protein bL31B (88 aa).

This sequence belongs to the bacterial ribosomal protein bL31 family. Type B subfamily. As to quaternary structure, part of the 50S ribosomal subunit.

This chain is Large ribosomal subunit protein bL31B, found in Herminiimonas arsenicoxydans.